A 308-amino-acid polypeptide reads, in one-letter code: Mycothiol acetyltransferase (308 aa).

The disordered stretch occupies residues 1–20 (MTSDDTAQPSGARRIETRPD). N-acetyltransferase domains follow at residues 15-152 (IETR…RSLT) and 165-308 (VTVR…RSET). Residue glutamate 47 coordinates 1D-myo-inositol 2-(L-cysteinylamino)-2-deoxy-alpha-D-glucopyranoside. 91–93 (LVV) lines the acetyl-CoA pocket. Residues glutamate 192, lysine 231, and glutamate 240 each coordinate 1D-myo-inositol 2-(L-cysteinylamino)-2-deoxy-alpha-D-glucopyranoside. Acetyl-CoA is bound by residues 244–246 (VGV) and 251–257 (QGGGLGK). Tyrosine 278 serves as a coordination point for 1D-myo-inositol 2-(L-cysteinylamino)-2-deoxy-alpha-D-glucopyranoside.

This sequence belongs to the acetyltransferase family. MshD subfamily. Monomer.

It carries out the reaction 1D-myo-inositol 2-(L-cysteinylamino)-2-deoxy-alpha-D-glucopyranoside + acetyl-CoA = mycothiol + CoA + H(+). In terms of biological role, catalyzes the transfer of acetyl from acetyl-CoA to desacetylmycothiol (Cys-GlcN-Ins) to form mycothiol. The polypeptide is Mycothiol acetyltransferase (Streptomyces scabiei (strain 87.22)).